The following is a 414-amino-acid chain: Voltage-gated ClC-type chloride channel ClcB (414 aa).

The next 11 helical transmembrane spans lie at 5 to 25, 54 to 74, 116 to 136, 147 to 167, 169 to 189, 220 to 240, 255 to 275, 292 to 312, 327 to 347, 353 to 373, and 381 to 401; these read LVIS…FHQA, ALTP…YQRY, SAIG…SVFA, LWVA…PLAG, LFIA…PVVI, VQYF…PLFL, LLPP…SLIF, TPPG…AVLA, LFVG…WPVL, LLMA…APIM, and MTGE…ATTI.

It belongs to the chloride channel (TC 2.A.49) family. ClcB subfamily.

The protein localises to the cell inner membrane. Functionally, probably acts as an electrical shunt for an outwardly-directed proton pump that is linked to amino acid decarboxylation, as part of the extreme acid resistance (XAR) response. The sequence is that of Voltage-gated ClC-type chloride channel ClcB from Yersinia pseudotuberculosis serotype O:1b (strain IP 31758).